The following is a 513-amino-acid chain: Histidine--tRNA ligase (513 aa).

The transit peptide at 1-24 (MADKAQLQEAIKTQGEVVRKLKSE) directs the protein to the mitochondrion. Residues 3 to 59 (DKAQLQEAIKTQGEVVRKLKSEKASKEQIDEEVARLLQLKAQLGGDEGKHVFVLKTA) form the WHEP-TRS domain. L-histidine contacts are provided by residues 130–132 (DLT), Arg-157, Gln-173, Asp-177, Arg-326, and 330–331 (YY).

It belongs to the class-II aminoacyl-tRNA synthetase family.

Its subcellular location is the cytoplasm. It is found in the mitochondrion. It catalyses the reaction tRNA(His) + L-histidine + ATP = L-histidyl-tRNA(His) + AMP + diphosphate + H(+). Functionally, catalyzes the aminoacylation of histidyl-tRNA. In Danio rerio (Zebrafish), this protein is Histidine--tRNA ligase.